Reading from the N-terminus, the 279-residue chain is Ribonuclease T2 protein rnst-2 (279 aa).

Residues 1–17 (MKLLLLLCISCIPLAYS) form the signal peptide. Cys-37 and Cys-48 are disulfide-bonded. Residue His-60 is part of the active site. Asn-68 is a glycosylation site (N-linked (GlcNAc...) asparagine). Catalysis depends on residues Glu-114 and His-118. Cys-200 and Cys-210 are oxidised to a cystine.

The protein belongs to the RNase T2 family. In terms of tissue distribution, expressed in the pharynx, hypodermis, muscle cells, sheath cells, intestinal cells, the vulva and tail regions.

It is found in the lysosome. It carries out the reaction a ribonucleotidyl-ribonucleotide-RNA + H2O = a 3'-end 3'-phospho-ribonucleotide-RNA + a 5'-end dephospho-ribonucleoside-RNA + H(+). Functionally, probable endoribonuclease involved in the autophagy-mediated degradation of ribosomal RNA and ribosomal proteins in lysosomes. The chain is Ribonuclease T2 protein rnst-2 from Caenorhabditis elegans.